The chain runs to 245 residues: Probable transcriptional regulatory protein LVIS_1199 (245 aa).

The segment at 1-23 (MSGHSKWHNIQGRKNAQDAKRGK) is disordered.

This sequence belongs to the TACO1 family.

It localises to the cytoplasm. In Levilactobacillus brevis (strain ATCC 367 / BCRC 12310 / CIP 105137 / JCM 1170 / LMG 11437 / NCIMB 947 / NCTC 947) (Lactobacillus brevis), this protein is Probable transcriptional regulatory protein LVIS_1199.